The following is a 159-amino-acid chain: SsrA-binding protein (159 aa).

A disordered region spans residues 131–159 (KGKKLHDKRESEKERDWNRQKSRLLKDNG). Basic and acidic residues predominate over residues 137–159 (DKRESEKERDWNRQKSRLLKDNG).

It belongs to the SmpB family.

The protein resides in the cytoplasm. Functionally, required for rescue of stalled ribosomes mediated by trans-translation. Binds to transfer-messenger RNA (tmRNA), required for stable association of tmRNA with ribosomes. tmRNA and SmpB together mimic tRNA shape, replacing the anticodon stem-loop with SmpB. tmRNA is encoded by the ssrA gene; the 2 termini fold to resemble tRNA(Ala) and it encodes a 'tag peptide', a short internal open reading frame. During trans-translation Ala-aminoacylated tmRNA acts like a tRNA, entering the A-site of stalled ribosomes, displacing the stalled mRNA. The ribosome then switches to translate the ORF on the tmRNA; the nascent peptide is terminated with the 'tag peptide' encoded by the tmRNA and targeted for degradation. The ribosome is freed to recommence translation, which seems to be the essential function of trans-translation. The sequence is that of SsrA-binding protein from Rhizobium etli (strain CIAT 652).